A 288-amino-acid polypeptide reads, in one-letter code: Bifunctional protein FolD (288 aa).

Residues 171–173 (GRS), S196, and T237 contribute to the NADP(+) site.

This sequence belongs to the tetrahydrofolate dehydrogenase/cyclohydrolase family. As to quaternary structure, homodimer.

It carries out the reaction (6R)-5,10-methylene-5,6,7,8-tetrahydrofolate + NADP(+) = (6R)-5,10-methenyltetrahydrofolate + NADPH. The catalysed reaction is (6R)-5,10-methenyltetrahydrofolate + H2O = (6R)-10-formyltetrahydrofolate + H(+). It participates in one-carbon metabolism; tetrahydrofolate interconversion. Catalyzes the oxidation of 5,10-methylenetetrahydrofolate to 5,10-methenyltetrahydrofolate and then the hydrolysis of 5,10-methenyltetrahydrofolate to 10-formyltetrahydrofolate. This Elusimicrobium minutum (strain Pei191) protein is Bifunctional protein FolD.